A 148-amino-acid polypeptide reads, in one-letter code: Cell division protein SepF (148 aa).

It belongs to the SepF family. Homodimer. Interacts with FtsZ.

It is found in the cytoplasm. Its function is as follows. Cell division protein that is part of the divisome complex and is recruited early to the Z-ring. Probably stimulates Z-ring formation, perhaps through the cross-linking of FtsZ protofilaments. Its function overlaps with FtsA. This is Cell division protein SepF from Alkaliphilus metalliredigens (strain QYMF).